A 396-amino-acid polypeptide reads, in one-letter code: Gamma-D-glutamyl-L-diamino acid endopeptidase 1 (396 aa).

LysM domains are found at residues 1-45 and 51-95; these read MDIL…RIQI and TSYT…TIQV. The Peptidase M14 domain occupies 108-394; it reads QNYDYSMMMN…EALGIFLAGL (287 aa). Zn(2+) is bound by residues histidine 162 and glutamate 165. Residue aspartate 255 coordinates substrate. Position 307 (histidine 307) interacts with Zn(2+). Tyrosine 347 serves as the catalytic Proton donor. Catalysis depends on glutamate 366, which acts as the Proton donor/acceptor.

This sequence belongs to the peptidase M14 family. Zn(2+) serves as cofactor.

The enzyme catalyses Hydrolysis of gamma-D-glutamyl bonds to the L-terminus (position 7) of meso-diaminopimelic acid (meso-A2pm) in 7-(L-Ala-gamma-D-Glu)-meso-A2pm and 7-(L-Ala-gamma-D-Glu)-7-(D-Ala)-meso-A2pm. It is required that the D-terminal amino and carboxy groups of meso-A2pm are unsubstituted.. Functionally, an endopeptidase which hydrolyzes the gamma-D-Glu-(L)meso-diaminopimelic acid bond of L-Ala-gamma-D-Glu-(L)meso-diaminopimelic acid and L-Ala-gamma-D-Glu-(L)meso-diaminopimelic acid(L)-D-Ala peptides. It is active on spore cortex peptidoglycan. This Lysinibacillus sphaericus (Bacillus sphaericus) protein is Gamma-D-glutamyl-L-diamino acid endopeptidase 1.